The sequence spans 272 residues: Formamidopyrimidine-DNA glycosylase (272 aa).

Proline 2 serves as the catalytic Schiff-base intermediate with DNA. Glutamate 3 serves as the catalytic Proton donor. Residue lysine 58 is the Proton donor; for beta-elimination activity of the active site. Histidine 93, arginine 112, and arginine 153 together coordinate DNA. Residues 238 to 272 form an FPG-type zinc finger; the sequence is HVYGKSGQHCPKCGNILEDLKISNRGTVYCPHCQR. Arginine 262 functions as the Proton donor; for delta-elimination activity in the catalytic mechanism.

The protein belongs to the FPG family. In terms of assembly, monomer. Zn(2+) is required as a cofactor.

It carries out the reaction Hydrolysis of DNA containing ring-opened 7-methylguanine residues, releasing 2,6-diamino-4-hydroxy-5-(N-methyl)formamidopyrimidine.. It catalyses the reaction 2'-deoxyribonucleotide-(2'-deoxyribose 5'-phosphate)-2'-deoxyribonucleotide-DNA = a 3'-end 2'-deoxyribonucleotide-(2,3-dehydro-2,3-deoxyribose 5'-phosphate)-DNA + a 5'-end 5'-phospho-2'-deoxyribonucleoside-DNA + H(+). Involved in base excision repair of DNA damaged by oxidation or by mutagenic agents. Acts as a DNA glycosylase that recognizes and removes damaged bases. Has a preference for oxidized purines, such as 7,8-dihydro-8-oxoguanine (8-oxoG). Has AP (apurinic/apyrimidinic) lyase activity and introduces nicks in the DNA strand. Cleaves the DNA backbone by beta-delta elimination to generate a single-strand break at the site of the removed base with both 3'- and 5'-phosphates. The protein is Formamidopyrimidine-DNA glycosylase of Dichelobacter nodosus (strain VCS1703A).